Reading from the N-terminus, the 246-residue chain is DNA repair protein RecO (246 aa).

Belongs to the RecO family.

Its function is as follows. Involved in DNA repair and RecF pathway recombination. This Bifidobacterium adolescentis (strain ATCC 15703 / DSM 20083 / NCTC 11814 / E194a) protein is DNA repair protein RecO.